The primary structure comprises 295 residues: Acetylglutamate kinase (295 aa).

Substrate contacts are provided by residues 66 to 67 (GG), Arg88, and Asn193.

Belongs to the acetylglutamate kinase family. ArgB subfamily.

The protein resides in the cytoplasm. It catalyses the reaction N-acetyl-L-glutamate + ATP = N-acetyl-L-glutamyl 5-phosphate + ADP. It functions in the pathway amino-acid biosynthesis; L-arginine biosynthesis; N(2)-acetyl-L-ornithine from L-glutamate: step 2/4. Functionally, catalyzes the ATP-dependent phosphorylation of N-acetyl-L-glutamate. This is Acetylglutamate kinase from Rhizobium johnstonii (strain DSM 114642 / LMG 32736 / 3841) (Rhizobium leguminosarum bv. viciae).